A 160-amino-acid chain; its full sequence is MSIQKKPDLSDPKLRAKLAQGMGHNYYGEPAWPNDLLYVFPVVILGTIGLVTALAVLDPALVGEPADPFATPLEILPEWYLYPVFQILRILPNKLLGIACQAAIPLGLMLVPFIESVNKFQNPFRRPVATAVFLFGTVVTLWLGAGATFPIDKSLTLGLF.

Transmembrane regions (helical) follow at residues 36 to 56 (LLYVFPVVILGTIGLVTALAV), 95 to 115 (LLGIACQAAIPLGLMLVPFIE), and 131 to 151 (AVFLFGTVVTLWLGAGATFPI).

It belongs to the cytochrome b family. PetD subfamily. As to quaternary structure, the 4 large subunits of the cytochrome b6-f complex are cytochrome b6, subunit IV (17 kDa polypeptide, PetD), cytochrome f and the Rieske protein, while the 4 small subunits are PetG, PetL, PetM and PetN. The complex functions as a dimer.

It is found in the cellular thylakoid membrane. Component of the cytochrome b6-f complex, which mediates electron transfer between photosystem II (PSII) and photosystem I (PSI), cyclic electron flow around PSI, and state transitions. The polypeptide is Cytochrome b6-f complex subunit 4 (Rippkaea orientalis (strain PCC 8801 / RF-1) (Cyanothece sp. (strain PCC 8801))).